Here is a 35-residue protein sequence, read N- to C-terminus: Cupiennin-1a (35 aa).

The residue at position 35 (Glu-35) is a Glutamic acid 1-amide.

The protein belongs to the cationic peptide 04 (cupiennin) family. 01 subfamily. As to quaternary structure, monomer. Interacts with CSTX-1 (AC P81694), CSTX-9 (AC P58604), and CSTX-13 (AC P83919). As to expression, expressed by the venom gland.

It is found in the secreted. Has antimicrobial activity against B.subtilis, E.coli, E.faecalis, P.denitrificans, P.aeruginosa, P.putida, S.aureus, and S.epidermidis. Shows insecticidal and hemolytic activities. Probably acts by disturbing membrane function with its amphipathic structure. Synergistically increases the insecticidal activity of CSTX-1 (AC P81694), CSTX-9 (AC P58604), and CSTX-13 (AC P83919) by up to 65%. Also inhibits the formation of nitric oxide by neuronal nitric oxide synthase. In Cupiennius salei (American wandering spider), this protein is Cupiennin-1a.